We begin with the raw amino-acid sequence, 391 residues long: NADH-quinone oxidoreductase subunit D (391 aa).

This sequence belongs to the complex I 49 kDa subunit family. As to quaternary structure, NDH-1 is composed of 14 different subunits. Subunits NuoB, C, D, E, F, and G constitute the peripheral sector of the complex.

Its subcellular location is the cell inner membrane. The enzyme catalyses a quinone + NADH + 5 H(+)(in) = a quinol + NAD(+) + 4 H(+)(out). Its function is as follows. NDH-1 shuttles electrons from NADH, via FMN and iron-sulfur (Fe-S) centers, to quinones in the respiratory chain. The immediate electron acceptor for the enzyme in this species is believed to be ubiquinone. Couples the redox reaction to proton translocation (for every two electrons transferred, four hydrogen ions are translocated across the cytoplasmic membrane), and thus conserves the redox energy in a proton gradient. This is NADH-quinone oxidoreductase subunit D from Rickettsia rickettsii (strain Sheila Smith).